The following is a 773-amino-acid chain: Disintegrin and metalloproteinase domain-containing protein 11 (773 aa).

The signal sequence occupies residues 1–24; sequence MRRLRRWAIAALLLLPLLPPPGLG. Positions 25–229 are excised as a propeptide; the sequence is ALGPRGALHW…PNWPKLRRKR (205 aa). The disordered stretch occupies residues 36-82; that stretch reads SSAHVGSPESPEGSEVTEPSRLVRQSSGGEVRKPQLDTRVRQDPPRG. Residues 65–79 are compositionally biased toward basic and acidic residues; it reads EVRKPQLDTRVRQDP. N-linked (GlcNAc...) asparagine glycans are attached at residues Asn-100 and Asn-167. Residues 230 to 738 lie on the Extracellular side of the membrane; sequence QVRRGHPTVH…ERYKGPSGTN (509 aa). The 200-residue stretch at 243–442 folds into the Peptidase M12B domain; it reads KYVELIVIND…GGGSCLFNKP (200 aa). The segment at 336–773 is required for localization to cerebellar cortex basket cell terminals. Also required for localization of KCNA1, KCNA2, DLG4 and ADAM22 to cerebellar cortex basket cell terminal perisomatic axons and pinceaux; it reads GRTFQSTSSG…NIRRGRSGGA (438 aa). Cystine bridges form between Cys-353–Cys-437, Cys-396–Cys-421, Cys-398–Cys-405, and Cys-507–Cys-527. A Disintegrin domain is found at 448 to 535; that stretch reads PPECGNGFVE…QCPPNLHKLD (88 aa). 2 N-linked (GlcNAc...) asparagine glycosylation sites follow: Asn-609 and Asn-677. 3 disulfides stabilise this stretch: Cys-681-Cys-696, Cys-690-Cys-702, and Cys-704-Cys-713. An EGF-like domain is found at 681–713; it reads CPGSGERRICSHHGVCSNEGKCICQPDWTGKDC. Residues 739-759 traverse the membrane as a helical segment; sequence IIIGSIAGAVLVAAIVLGGTG. Over 760–773 the chain is Cytoplasmic; that stretch reads WGFKNIRRGRSGGA.

In terms of assembly, interacts with LGI1 and LGI4. Interacts with KCNA1/KV1.1, KCNA2/KV1.2, DLG4/PSD-95 and ADAM22. In terms of processing, the precursor is cleaved by a furin endopeptidase. As to expression, abundantly expressed in cerebellar cortex basket cell terminals and pinceaux, weakly expressed in Purkinje cells (at protein level). Weakly expressed in the heart. Abundantly in expressed in neurons throughout the central nervous system including the telencephalon, diencephalic and brainstem nuclei, cerebellum and spinal cord. Expressed in the peripheral nervous system trigeminal and dorsal root ganglia. Expressed in the ganglion and bipolar cells of the retinae and weakly in the cornea of the eyes. Expressed in the hepatocytes of the parenchyma and hepatic lobules of the liver. Expressed in distinct focal areas in the juxtamedullary cortex of the kidney. Expressed in spermatocytes in the seminiferous tubules of the testes. Expressed in the stratum spinosum of the stratified squamous epithelia of the tongue and esophagus.

The protein resides in the presynaptic cell membrane. Its subcellular location is the perikaryon. It is found in the cell projection. The protein localises to the axon. Probable ligand for integrin in the brain. This is a non catalytic metalloprotease-like protein. Required for localization of the potassium channel subunit proteins KCNA1/KV1.1 and KCNA2/KV1.2 at cerebellar cortex basket cell distal terminals, is thereby involved in ephaptic inhibitory synchronization of Purkinje cell firing and response to stress. Plays a role in spatial learning and motor coordination. Involved in the nociceptive pain response to chemical-derived stimulation. The sequence is that of Disintegrin and metalloproteinase domain-containing protein 11 (Adam11) from Mus musculus (Mouse).